Consider the following 124-residue polypeptide: Small ribosomal subunit protein uS12 (124 aa).

Asp89 carries the 3-methylthioaspartic acid modification.

The protein belongs to the universal ribosomal protein uS12 family. In terms of assembly, part of the 30S ribosomal subunit. Contacts proteins S8 and S17. May interact with IF1 in the 30S initiation complex.

In terms of biological role, with S4 and S5 plays an important role in translational accuracy. Functionally, interacts with and stabilizes bases of the 16S rRNA that are involved in tRNA selection in the A site and with the mRNA backbone. Located at the interface of the 30S and 50S subunits, it traverses the body of the 30S subunit contacting proteins on the other side and probably holding the rRNA structure together. The combined cluster of proteins S8, S12 and S17 appears to hold together the shoulder and platform of the 30S subunit. The chain is Small ribosomal subunit protein uS12 from Shewanella denitrificans (strain OS217 / ATCC BAA-1090 / DSM 15013).